We begin with the raw amino-acid sequence, 330 residues long: Tryptophan--tRNA ligase (330 aa).

ATP is bound by residues 6–8 (QPT) and 14–15 (GN). Positions 7–15 (PTGSLHLGN) match the 'HIGH' region motif. Asp-130 serves as a coordination point for L-tryptophan. ATP-binding positions include 142–144 (GED), Val-185, and 194–198 (KMSKS). A 'KMSKS' region motif is present at residues 194-198 (KMSKS).

The protein belongs to the class-I aminoacyl-tRNA synthetase family. As to quaternary structure, homodimer.

The protein resides in the cytoplasm. It carries out the reaction tRNA(Trp) + L-tryptophan + ATP = L-tryptophyl-tRNA(Trp) + AMP + diphosphate + H(+). Functionally, catalyzes the attachment of tryptophan to tRNA(Trp). The polypeptide is Tryptophan--tRNA ligase (Thermosynechococcus vestitus (strain NIES-2133 / IAM M-273 / BP-1)).